The sequence spans 327 residues: Transaldolase (327 aa).

Catalysis depends on lysine 132, which acts as the Schiff-base intermediate with substrate.

Belongs to the transaldolase family. Type 1 subfamily. In terms of assembly, homodimer.

Its subcellular location is the cytoplasm. It catalyses the reaction D-sedoheptulose 7-phosphate + D-glyceraldehyde 3-phosphate = D-erythrose 4-phosphate + beta-D-fructose 6-phosphate. The protein operates within carbohydrate degradation; pentose phosphate pathway; D-glyceraldehyde 3-phosphate and beta-D-fructose 6-phosphate from D-ribose 5-phosphate and D-xylulose 5-phosphate (non-oxidative stage): step 2/3. Functionally, transaldolase is important for the balance of metabolites in the pentose-phosphate pathway. The chain is Transaldolase from Chlamydia caviae (strain ATCC VR-813 / DSM 19441 / 03DC25 / GPIC) (Chlamydophila caviae).